A 188-amino-acid polypeptide reads, in one-letter code: Mediator of RNA polymerase II transcription subunit 11 (188 aa).

Residues 46–72 adopt a coiled-coil conformation; sequence KNKMEDNANNFKKLITQVENELSAQMQ. A disordered region spans residues 116–188; the sequence is DPTSDEPQTT…MTDDDDDMEQ (73 aa). Residues 123-141 show a composition bias toward acidic residues; sequence QTTEEDEEDGSDDLNEDGA. Positions 146–155 are enriched in low complexity; sequence SSTVTSSTTD. Positions 171 to 180 are enriched in basic and acidic residues; sequence SQEESGRQMT.

The protein belongs to the Mediator complex subunit 11 family. As to quaternary structure, component of the Mediator complex.

It localises to the nucleus. Component of the Mediator complex, a coactivator involved in the regulated transcription of nearly all RNA polymerase II-dependent genes. Mediator functions as a bridge to convey information from gene-specific regulatory proteins to the basal RNA polymerase II transcription machinery. Mediator is recruited to promoters by direct interactions with regulatory proteins and serves as a scaffold for the assembly of a functional pre-initiation complex with RNA polymerase II and the general transcription factors. The protein is Mediator of RNA polymerase II transcription subunit 11 (mdt-11) of Caenorhabditis elegans.